Consider the following 180-residue polypeptide: MASTISAYKEKMKELSVLSLICSCFYTQPHPNTVYQYGDMEVKQLDKRASGQSFEVILKSPSDLSPESPMLSSPPKKKDTSLEELQKRLEAAEERRKTQEAQVLKQLAERREHEREVLHKALEENNNFSRQAEEKLNYKMELSKEIREAHLAALRERLREKELHAAEVRRNKEQREEMSG.

S-palmitoyl cysteine attachment occurs at residues Cys22 and Cys24. In terms of domain architecture, SLD spans 38–180 (GDMEVKQLDK…NKEQREEMSG (143 aa)). Ser50, Ser60, Ser65, Ser68, Ser72, Ser73, and Ser81 each carry phosphoserine. The segment at 59–82 (KSPSDLSPESPMLSSPPKKKDTSL) is disordered. Positions 60–74 (SPSDLSPESPMLSSP) are enriched in low complexity. The stretch at 75–179 (PKKKDTSLEE…RNKEQREEMS (105 aa)) forms a coiled coil.

It belongs to the stathmin family. As to quaternary structure, interacts with STAT3. Interacts with CLU (secreted form); this interaction may act as an important modulator during neuronal differentiation. Post-translationally, N-terminal palmitoylation promotes specific anchoring to the cytosolic leaflet of Golgi membranes and subsequent vesicular trafficking along dendrites and axons. Neuronal Stathmins are substrates for palmitoyltransferases ZDHHC3, ZDHHC7 and ZDHHC15. As to expression, neuron specific.

Its subcellular location is the golgi apparatus. The protein resides in the cell projection. It localises to the growth cone. It is found in the axon. The protein localises to the cytoplasm. Its subcellular location is the cytosol. In terms of biological role, exhibits microtubule-destabilizing activity, which is antagonized by STAT3. This is Stathmin-3 (STMN3) from Homo sapiens (Human).